The sequence spans 246 residues: UDP-N-acetyl-D-mannosaminuronic acid transferase (246 aa).

This sequence belongs to the glycosyltransferase 26 family.

It carries out the reaction UDP-N-acetyl-alpha-D-mannosaminouronate + N-acetyl-alpha-D-glucosaminyl-di-trans,octa-cis-undecaprenyl diphosphate = beta-D-ManNAcA-(1-&gt;4)-alpha-D-GlcNAc-di-trans,octa-cis-undecaprenyl diphosphate + UDP + H(+). The protein operates within bacterial outer membrane biogenesis; enterobacterial common antigen biosynthesis. In terms of biological role, catalyzes the synthesis of Und-PP-GlcNAc-ManNAcA (Lipid II), the second lipid-linked intermediate involved in enterobacterial common antigen (ECA) synthesis. This chain is UDP-N-acetyl-D-mannosaminuronic acid transferase, found in Klebsiella pneumoniae (strain 342).